Reading from the N-terminus, the 929-residue chain is Transcription initiation factor TFIID subunit 3 (929 aa).

2 disordered regions span residues 131-152 (IVSSQEEEEEEQVPTDGGTSAE) and 176-197 (LGKRPLDSPEAEELPAMKRPRL). A phosphoserine mark is found at Ser-183, Ser-199, Ser-229, and Ser-243. Disordered regions lie at residues 221 to 358 (TQKI…ETIQ) and 405 to 578 (DPFE…PWKE). Low complexity predominate over residues 265-288 (TKSFTPKTKTKTSSPGQKTKSPKT). Lys-266 is modified (N6-acetyllysine). Ser-291, Ser-297, and Ser-301 each carry phosphoserine. Composition is skewed to polar residues over residues 340–358 (PNRTPSATLSEKISKETIQ) and 434–466 (PKASTSANNFTKSGSTPLPLSGGTSSSDNSWTM). The residue at position 501 (Thr-501) is a Phosphothreonine. Residues 504 to 514 (PLHKVYEEKTK) are compositionally biased toward basic and acidic residues. Over residues 523–537 (KKLKKELKTKMKKKE) the composition is skewed to basic residues. Residues 538–578 (KQRDREREKDKNKDKSKEKDKVKEKEKDKETGRETKYPWKE) show a composition bias toward basic and acidic residues. Residue Lys-581 forms a Glycyl lysine isopeptide (Lys-Gly) (interchain with G-Cter in SUMO2) linkage. Composition is skewed to basic and acidic residues over residues 603 to 612 (KLKDGLVRKE) and 621 to 648 (KDREKGKKDKDKREKEKVKDKGREDKMK). Residues 603–658 (KLKDGLVRKEKEKHKDKKKDREKGKKDKDKREKEKVKDKGREDKMKAPAPPLVLPP) form a disordered region. At Ser-667 the chain carries Phosphoserine. Residues 692-701 (EKEKVKEKEK) are compositionally biased toward basic and acidic residues. A disordered region spans residues 692-748 (EKEKVKEKEKKKDKKEKKKKKEKEKEKKEKEREKEKREREKREKEKEKHKHEKIKVE). The span at 702 to 713 (KKDKKEKKKKKE) shows a compositional bias: basic residues. Basic and acidic residues predominate over residues 714 to 737 (KEKEKKEKEREKEKREREKREKEK). A Glycyl lysine isopeptide (Lys-Gly) (interchain with G-Cter in SUMO2) cross-link involves residue Lys-746. Ser-755 is modified (phosphoserine). Lys-776 bears the N6-acetyllysine mark. Residues 778–787 (VPAPEAKPAP) show a composition bias toward low complexity. A disordered region spans residues 778 to 807 (VPAPEAKPAPSQNRPKTPPPAPAPAPGPML). Over residues 793 to 804 (KTPPPAPAPAPG) the composition is skewed to pro residues. Residues 865–915 (IWICPGCNKPDDGSPMIGCDDCDDWYHWPCVGIMTAPPEEMQWFCPKCANK) form a PHD-type zinc finger. Positions 868, 871, 883, 886, 891, 894, 909, and 912 each coordinate Zn(2+).

The protein belongs to the TAF3 family. In terms of assembly, component of the TFIID basal transcription factor complex, composed of TATA-box-binding protein TBP, and a number of TBP-associated factors (TAFs), including TAF1, TAF2, TAF3, TAF4, TAF5, TAF6, TAF7, TAF8, TAF9, TAF10, TAF11, TAF12 and TAF13. Interacts with TAF10 via the histone fold. Interacts with TAF13, TBP, SAP130 and GCN5L2. Interacts with TBPL2.

Its subcellular location is the nucleus. Its function is as follows. The TFIID basal transcription factor complex plays a major role in the initiation of RNA polymerase II (Pol II)-dependent transcription. TFIID recognizes and binds promoters with or without a TATA box via its subunit TBP, a TATA-box-binding protein, and promotes assembly of the pre-initiation complex (PIC). The TFIID complex consists of TBP and TBP-associated factors (TAFs), including TAF1, TAF2, TAF3, TAF4, TAF5, TAF6, TAF7, TAF8, TAF9, TAF10, TAF11, TAF12 and TAF13. The TFIID complex structure can be divided into 3 modules TFIID-A, TFIID-B, and TFIID-C. TAF3 forms the TFIID-A module together with TAF5 and TBP. Required in complex with TBPL2 for the differentiation of myoblasts into myocytes. The TAF3-TBPL2 complex replaces TFIID at specific promoters at an early stage in the differentiation process. The sequence is that of Transcription initiation factor TFIID subunit 3 (TAF3) from Homo sapiens (Human).